The sequence spans 364 residues: Methylthioribose-1-phosphate isomerase (364 aa).

Substrate is bound by residues 53–55 (RGA), Arg90, and Gln203. The active-site Proton donor is the Asp244. 254 to 255 (NK) is a substrate binding site.

The protein belongs to the eIF-2B alpha/beta/delta subunits family. MtnA subfamily.

The enzyme catalyses 5-(methylsulfanyl)-alpha-D-ribose 1-phosphate = 5-(methylsulfanyl)-D-ribulose 1-phosphate. The protein operates within amino-acid biosynthesis; L-methionine biosynthesis via salvage pathway; L-methionine from S-methyl-5-thio-alpha-D-ribose 1-phosphate: step 1/6. Functionally, catalyzes the interconversion of methylthioribose-1-phosphate (MTR-1-P) into methylthioribulose-1-phosphate (MTRu-1-P). This chain is Methylthioribose-1-phosphate isomerase, found in Brucella anthropi (strain ATCC 49188 / DSM 6882 / CCUG 24695 / JCM 21032 / LMG 3331 / NBRC 15819 / NCTC 12168 / Alc 37) (Ochrobactrum anthropi).